Here is a 228-residue protein sequence, read N- to C-terminus: Cytidylate kinase (228 aa).

17–25 (GPTASGKGT) contacts ATP.

The protein belongs to the cytidylate kinase family. Type 1 subfamily.

The protein localises to the cytoplasm. The catalysed reaction is CMP + ATP = CDP + ADP. The enzyme catalyses dCMP + ATP = dCDP + ADP. The protein is Cytidylate kinase of Burkholderia ambifaria (strain MC40-6).